Consider the following 209-residue polypeptide: Probable chalcone--flavanone isomerase 3 (209 aa).

It belongs to the chalcone isomerase family.

The enzyme catalyses a chalcone = a flavanone.. It participates in secondary metabolite biosynthesis; flavonoid biosynthesis. Involved in anthocyanin biosynthesis. This is Probable chalcone--flavanone isomerase 3 (CHI3) from Arabidopsis thaliana (Mouse-ear cress).